The primary structure comprises 433 residues: Cell division protein FtsZ homolog 1, chloroplastic (433 aa).

The transit peptide at 1 to 66 directs the protein to the chloroplast; the sequence is MAIIPLAQLN…TRSKSMRLRC (66 aa). N-acetylserine is present on serine 67. Residues 83–87, 170–172, glutamate 201, arginine 205, and aspartate 249 each bind GTP; these read GGGNN and GTG. Residues 399–433 form a disordered region; it reads GSSGQQENKGMSLPHQKQSPSTISTKSSSPRRLFF. Low complexity predominate over residues 414–433; sequence QKQSPSTISTKSSSPRRLFF.

This sequence belongs to the FtsZ family. In terms of assembly, aggregates to form a contractile ring-like structure; contraction of the ring was accompanied by an increase in the filament turnover rate. This aggregation is regulated in midchloroplast stroma by MIND1 (repressor) and MINE1 (promoter). Self-interacts and binds to FTSZ2-1 in heteromers to form two morphologically distinct types of filaments, termed type-I (smooth filaments) and type-II (rough filaments), in a GTP-dependent manner. Interacts with ARC3. Part of a complex made of ARC3, ARC6, FTSZ1 and FTSZ2. In terms of tissue distribution, in pollen grain, restricted to plastids of vegetative cells. Also present in pollen tubes plastids.

Its subcellular location is the plastid. It is found in the chloroplast stroma. The protein localises to the chloroplast thylakoid membrane. Exhibits GTPase activity. Component of the plastid division machinery that forms a contractile ring at the division site. Required for plastid division in a dose-dependent manner. Involved in epidermal plastids division in a MINE1-dependent manner. Involved in blue light-induced chloroplast movements. May regulate thylakoid development. In the vegetative shoot apex, at the shoot apical meristem (SAM), where the proplastid-to-chloroplast transition takes place, contributes equally with FTSZ2-1 in the L2 layer to plastid division. The polypeptide is Cell division protein FtsZ homolog 1, chloroplastic (Arabidopsis thaliana (Mouse-ear cress)).